Reading from the N-terminus, the 466-residue chain is Cysteine--tRNA ligase (466 aa).

A Zn(2+)-binding site is contributed by cysteine 33. A 'HIGH' region motif is present at residues proline 35–asparagine 45. Zn(2+) contacts are provided by cysteine 221, histidine 246, and glutamate 250. The 'KMSKS' region motif lies at lysine 279–serine 283. Position 282 (lysine 282) interacts with ATP.

This sequence belongs to the class-I aminoacyl-tRNA synthetase family. Monomer. Zn(2+) serves as cofactor.

The protein resides in the cytoplasm. The catalysed reaction is tRNA(Cys) + L-cysteine + ATP = L-cysteinyl-tRNA(Cys) + AMP + diphosphate. This chain is Cysteine--tRNA ligase, found in Sinorhizobium medicae (strain WSM419) (Ensifer medicae).